Reading from the N-terminus, the 488-residue chain is Phenylalanine--tRNA ligase alpha subunit (488 aa).

L-phenylalanine contacts are provided by residues Thr-332, 371-373, and Phe-410; that span reads QLD. Glu-412 serves as a coordination point for Mg(2+). Residue Phe-435 participates in L-phenylalanine binding.

This sequence belongs to the class-II aminoacyl-tRNA synthetase family. Phe-tRNA synthetase alpha subunit type 2 subfamily. In terms of assembly, tetramer of two alpha and two beta subunits. Mg(2+) is required as a cofactor.

The protein localises to the cytoplasm. It catalyses the reaction tRNA(Phe) + L-phenylalanine + ATP = L-phenylalanyl-tRNA(Phe) + AMP + diphosphate + H(+). The polypeptide is Phenylalanine--tRNA ligase alpha subunit (Aeropyrum pernix (strain ATCC 700893 / DSM 11879 / JCM 9820 / NBRC 100138 / K1)).